The chain runs to 453 residues: Bifunctional protein GlmU (453 aa).

The pyrophosphorylase stretch occupies residues methionine 1–arginine 226. UDP-N-acetyl-alpha-D-glucosamine is bound by residues leucine 7–glycine 10, lysine 21, glutamine 72, glycine 77–threonine 78, tyrosine 99–aspartate 101, glycine 136, glutamate 151, asparagine 166, and asparagine 224. A Mg(2+)-binding site is contributed by aspartate 101. Asparagine 224 serves as a coordination point for Mg(2+). The segment at glutamine 227–alanine 247 is linker. The interval glycine 248 to serine 453 is N-acetyltransferase. UDP-N-acetyl-alpha-D-glucosamine-binding residues include arginine 330 and lysine 348. Residue histidine 360 is the Proton acceptor of the active site. UDP-N-acetyl-alpha-D-glucosamine-binding residues include tyrosine 363 and asparagine 374. Acetyl-CoA-binding positions include alanine 377, asparagine 383–tyrosine 384, serine 402, alanine 420, and arginine 437.

In the N-terminal section; belongs to the N-acetylglucosamine-1-phosphate uridyltransferase family. This sequence in the C-terminal section; belongs to the transferase hexapeptide repeat family. As to quaternary structure, homotrimer. Requires Mg(2+) as cofactor.

The protein localises to the cytoplasm. The enzyme catalyses alpha-D-glucosamine 1-phosphate + acetyl-CoA = N-acetyl-alpha-D-glucosamine 1-phosphate + CoA + H(+). It carries out the reaction N-acetyl-alpha-D-glucosamine 1-phosphate + UTP + H(+) = UDP-N-acetyl-alpha-D-glucosamine + diphosphate. The protein operates within nucleotide-sugar biosynthesis; UDP-N-acetyl-alpha-D-glucosamine biosynthesis; N-acetyl-alpha-D-glucosamine 1-phosphate from alpha-D-glucosamine 6-phosphate (route II): step 2/2. It functions in the pathway nucleotide-sugar biosynthesis; UDP-N-acetyl-alpha-D-glucosamine biosynthesis; UDP-N-acetyl-alpha-D-glucosamine from N-acetyl-alpha-D-glucosamine 1-phosphate: step 1/1. Its pathway is bacterial outer membrane biogenesis; LPS lipid A biosynthesis. Functionally, catalyzes the last two sequential reactions in the de novo biosynthetic pathway for UDP-N-acetylglucosamine (UDP-GlcNAc). The C-terminal domain catalyzes the transfer of acetyl group from acetyl coenzyme A to glucosamine-1-phosphate (GlcN-1-P) to produce N-acetylglucosamine-1-phosphate (GlcNAc-1-P), which is converted into UDP-GlcNAc by the transfer of uridine 5-monophosphate (from uridine 5-triphosphate), a reaction catalyzed by the N-terminal domain. This Cellvibrio japonicus (strain Ueda107) (Pseudomonas fluorescens subsp. cellulosa) protein is Bifunctional protein GlmU.